A 536-amino-acid chain; its full sequence is Subtilisin-like proteinase Spm1 (536 aa).

Positions 1–15 are cleaved as a signal peptide; it reads MKSVILLSLAACAVA. Residues 16 to 147 constitute a propeptide that is removed on maturation; it reads APTAGVETIH…RYEEVKKDEC (132 aa). One can recognise an Inhibitor I9 domain in the interval 44–137; sequence YIIKFKKHVD…IERDTIVHTM (94 aa). Residues 156 to 462 enclose the Peptidase S8 domain; sequence PWGLSRVSHR…GGCSNYFEIV (307 aa). Active-site charge relay system residues include Asp-192 and His-224. N-linked (GlcNAc...) asparagine glycans are attached at residues Asn-254 and Asn-294. The Charge relay system role is filled by Ser-390.

It belongs to the peptidase S8 family.

It is found in the vacuole. The chain is Subtilisin-like proteinase Spm1 (SPM1) from Pyricularia oryzae (strain 70-15 / ATCC MYA-4617 / FGSC 8958) (Rice blast fungus).